A 437-amino-acid chain; its full sequence is Regulator of phospholipase D SRF1 (437 aa).

A disordered region spans residues 1–24 (MGDSNSSQEAYSDTTSTNASRIAD). At 1–267 (MGDSNSSQEA…LTSLLLDNQY (267 aa)) the chain is on the cytoplasmic side. Residues S45 and S167 each carry the phosphoserine modification. A helical transmembrane segment spans residues 268-288 (LILGLRIFTGILSCISLALAI). Over 289 to 308 (KIFQNSRSNNTISESKIGQQ) the chain is Extracellular. N-linked (GlcNAc...) asparagine glycosylation is present at N297. A helical membrane pass occupies residues 309–329 (PSTIMAICVNAVAIAYIIYIA). Topologically, residues 330 to 348 (HDEFAGKPVGLRNPLSKLK) are cytoplasmic. Residues 349–369 (LILLDLLFIIFSSANLALAFN) traverse the membrane as a helical segment. Residues 370–403 (TRFDKEWVCTSIRRSNGSTYGYPKIPRICRKQEA) are Extracellular-facing. N-linked (GlcNAc...) asparagine glycosylation occurs at N385. A helical transmembrane segment spans residues 404–424 (LSAFLFVALFMWVITFSISIV). Topologically, residues 425-437 (RVVEKVSSITNRN) are cytoplasmic.

In terms of assembly, interacts with SPO14.

The protein resides in the membrane. In terms of biological role, regulator of phospholipase D (SPO14) which is required for SPO14 catalytic activity in mitotic cells. Essential to buffer the toxic effects of C16:0 platelet activating factor. The chain is Regulator of phospholipase D SRF1 (SRF1) from Saccharomyces cerevisiae (strain ATCC 204508 / S288c) (Baker's yeast).